A 282-amino-acid chain; its full sequence is Pantothenate synthetase (282 aa).

ATP is bound at residue 30 to 37 (MGYLHEGH). His37 serves as the catalytic Proton donor. Residue Gln61 participates in (R)-pantoate binding. Beta-alanine is bound at residue Gln61. Residue 147 to 150 (GQKD) coordinates ATP. Gln153 is a (R)-pantoate binding site. Residues Val176 and 184-187 (MSSR) contribute to the ATP site.

The protein belongs to the pantothenate synthetase family. Homodimer.

It is found in the cytoplasm. The catalysed reaction is (R)-pantoate + beta-alanine + ATP = (R)-pantothenate + AMP + diphosphate + H(+). Its pathway is cofactor biosynthesis; (R)-pantothenate biosynthesis; (R)-pantothenate from (R)-pantoate and beta-alanine: step 1/1. In terms of biological role, catalyzes the condensation of pantoate with beta-alanine in an ATP-dependent reaction via a pantoyl-adenylate intermediate. In Pelotomaculum thermopropionicum (strain DSM 13744 / JCM 10971 / SI), this protein is Pantothenate synthetase.